Consider the following 282-residue polypeptide: MRIDTVNVLLEALPYIKEFYGKTFVIKFGGSAMKQENAKKAFIQDIILLKYTGIKPIIVHGGGPAISQMMKDLGIEPVFKNGHRVTDEKTMEIVEMVLVGKINKEIVMNLNLHGGRAVGICGKDSKLIVAEKETKHGDIGYVGKVKKVNPEILHALIENDYIPVIAPVGIGEDGHSYNINADTAAAEIAKSLMAEKLILLTDVDGVLKDGKLISTLTPDEAEELIRDGTVTGGMIPKVECAVSAVRGGVGAVHIINGGLEHAILLEIFSRKGIGTMIKELEG.

Substrate contacts are provided by residues 62–63 (GG), Arg-84, and Asn-178. L-arginine-binding positions include Lys-196, Ser-214, and 266–269 (EIFS).

In terms of assembly, homohexamer.

It localises to the cytoplasm. The enzyme catalyses N-acetyl-L-glutamate + ATP = N-acetyl-L-glutamyl 5-phosphate + ADP. Its pathway is amino-acid biosynthesis; L-arginine biosynthesis; N(2)-acetyl-L-ornithine from L-glutamate: step 2/4. Allosterically inhibited by arginine. Catalyzes the ATP-dependent phosphorylation of N-acetyl-L-glutamate. This Thermotoga maritima (strain ATCC 43589 / DSM 3109 / JCM 10099 / NBRC 100826 / MSB8) protein is Acetylglutamate kinase.